The following is a 296-amino-acid chain: Cytidine deaminase (296 aa).

2 consecutive CMP/dCMP-type deaminase domains span residues 47–167 (TESE…FGPK) and 186–296 (DSSD…VDPI). Residue 88 to 90 (NLE) participates in substrate binding. His-101 lines the Zn(2+) pocket. The active-site Proton donor is the Glu-103. 2 residues coordinate Zn(2+): Cys-128 and Cys-131.

This sequence belongs to the cytidine and deoxycytidylate deaminase family. Homodimer. Zn(2+) is required as a cofactor.

It catalyses the reaction cytidine + H2O + H(+) = uridine + NH4(+). The enzyme catalyses 2'-deoxycytidine + H2O + H(+) = 2'-deoxyuridine + NH4(+). In terms of biological role, this enzyme scavenges exogenous and endogenous cytidine and 2'-deoxycytidine for UMP synthesis. The polypeptide is Cytidine deaminase (Shewanella oneidensis (strain ATCC 700550 / JCM 31522 / CIP 106686 / LMG 19005 / NCIMB 14063 / MR-1)).